Consider the following 119-residue polypeptide: Ribonuclease P protein component (119 aa).

The protein belongs to the RnpA family. As to quaternary structure, consists of a catalytic RNA component (M1 or rnpB) and a protein subunit.

The enzyme catalyses Endonucleolytic cleavage of RNA, removing 5'-extranucleotides from tRNA precursor.. Functionally, RNaseP catalyzes the removal of the 5'-leader sequence from pre-tRNA to produce the mature 5'-terminus. It can also cleave other RNA substrates such as 4.5S RNA. The protein component plays an auxiliary but essential role in vivo by binding to the 5'-leader sequence and broadening the substrate specificity of the ribozyme. The chain is Ribonuclease P protein component from Bacillus cereus (strain ZK / E33L).